The primary structure comprises 517 residues: Sterol 14-alpha demethylase CYP51C (517 aa).

Residues 10–30 traverse the membrane as a helical segment; it reads TLPLSVSIPLTTSIIIILSIV. Y115 is a lanosterol binding site. G300 contacts itraconazole. Heme is bound at residue C458.

It belongs to the cytochrome P450 family. Heme is required as a cofactor.

The protein localises to the endoplasmic reticulum membrane. It participates in steroid metabolism; ergosterol biosynthesis. Functionally, together with cyp51A and cyp51B, encodes the sterol 14alpha-demethylase that plays a critical role in the third module of ergosterol biosynthesis pathway, being ergosterol the major sterol component in fungal membranes that participates in a variety of functions. Cyp51C does not seem to encode an active sterol 14-alpha-demethylase, but can impact indirectly on sterol 14alpha-demethylation, and is required for full virulence on host wheat ears, but not on Arabidopsis floral tissue or the fruits of apple and tomato. The third module or late pathway involves the ergosterol synthesis itself through consecutive reactions that mainly occur in the endoplasmic reticulum (ER) membrane. In filamentous fungi, during the initial step of this module, lanosterol (lanosta-8,24-dien-3beta-ol) can be metabolized to eburicol. Sterol 14alpha-demethylase catalyzes the three-step oxidative removal of the 14alpha-methyl group (C-32) of both these sterols in the form of formate, and converts eburicol and lanosterol to 14-demethyleburicol (4,4,24-trimethylergosta-8,14,24(28)-trienol) and 4,4-dimethyl-5alpha-cholesta-8,14,24-trien-3beta-ol, respectively, which are further metabolized by other enzymes in the pathway to ergosterol. This chain is Sterol 14-alpha demethylase CYP51C, found in Gibberella zeae (strain ATCC MYA-4620 / CBS 123657 / FGSC 9075 / NRRL 31084 / PH-1) (Wheat head blight fungus).